The chain runs to 1034 residues: FACT complex subunit spt-16 (1034 aa).

3 stretches are compositionally biased toward basic and acidic residues: residues 433 to 448 (EEQENRETERDTDQKK), 463 to 481 (TRNKTTNEDLRKERQKELG), and 493 to 503 (SKQDGGTDEKK). The segment at 433 to 511 (EEQENRETER…KKVKKSNVSY (79 aa)) is disordered. The stretch at 617–642 (LSTAFRQIKEMQKRFRTEEAEEREKD) forms a coiled coil. Composition is skewed to acidic residues over residues 926-950 (AESEGEDAGDDSDESDAYDPEEADA) and 959-983 (SDEDESEGEETESDDDEEGSLDSDE). The interval 926–1034 (AESEGEDAGD…KAGPSHKRRK (109 aa)) is disordered. The span at 984–1020 (SEGKDWSDLEEEAAKADKRREVEDGGRDRDRDRDRKR) shows a compositional bias: basic and acidic residues. Residues 1021-1034 (PSSSKAGPSHKRRK) are compositionally biased toward basic residues.

The protein belongs to the peptidase M24 family. SPT16 subfamily. In terms of assembly, component of the FACT complex, a stable heterodimer of spt-16 and hmg-3 or hmg-4.

It localises to the nucleus. The protein localises to the chromosome. Its function is as follows. Component of the FACT complex, a general chromatin factor that acts to reorganize nucleosomes. The FACT complex is involved in multiple processes that require DNA as a template such as mRNA elongation, DNA replication and DNA repair. During transcription elongation the FACT complex acts as a histone chaperone that both destabilizes and restores nucleosomal structure. It facilitates the passage of RNA polymerase II and transcription by promoting the dissociation of one histone H2A-H2B dimer from the nucleosome, then subsequently promotes the reestablishment of the nucleosome following the passage of RNA polymerase II. This Caenorhabditis briggsae protein is FACT complex subunit spt-16 (spt-16).